A 147-amino-acid chain; its full sequence is Large ribosomal subunit protein bL9 (147 aa).

It belongs to the bacterial ribosomal protein bL9 family.

Functionally, binds to the 23S rRNA. The protein is Large ribosomal subunit protein bL9 of Halalkalibacterium halodurans (strain ATCC BAA-125 / DSM 18197 / FERM 7344 / JCM 9153 / C-125) (Bacillus halodurans).